The sequence spans 637 residues: Nuclear receptor subfamily 2 group C member 1-A (637 aa).

A DNA-binding region (nuclear receptor) is located at residues 149–224 (VELCVVCGDK…LGMKQDSVQC (76 aa)). NR C4-type zinc fingers lie at residues 152 to 172 (CVVC…CEGC) and 188 to 207 (CRGS…CQYC). Residues 383 to 624 (CLGSNANLLH…SIIPYILRME (242 aa)) form the NR LBD domain.

It belongs to the nuclear hormone receptor family. NR2 subfamily.

The protein resides in the nucleus. Orphan nuclear receptor. Binds the IR7 element in the promoter of its own gene in an autoregulatory negative feedback mechanism. Primarily repressor of a broad range of genes. Binds to hormone response elements (HREs) consisting of two 5'-AGGTCA-3' half site direct repeat consensus sequences. The protein is Nuclear receptor subfamily 2 group C member 1-A (nr2c1-a) of Xenopus laevis (African clawed frog).